A 664-amino-acid polypeptide reads, in one-letter code: Macoilin (664 aa).

Transmembrane regions (helical) follow at residues 28–48, 75–95, 120–140, and 154–174; these read TFLY…DFVL, AFSV…LLFI, VCLP…AIRF, and FAAH…KSYV. Positions 253–265 are enriched in basic and acidic residues; the sequence is REKGKEKDKDAKK. A disordered region spans residues 253–274; that stretch reads REKGKEKDKDAKKHNLGINNNN. S305 is subject to Phosphoserine. The span at 320-348 shows a compositional bias: polar residues; the sequence is KNYKNASGVVNSSPRSHSATNGSIPSSSS. The tract at residues 320–375 is disordered; the sequence is KNYKNASGVVNSSPRSHSATNGSIPSSSSKNEKKQKCTSKSPSTHKDLMENCIPNN. The N-linked (GlcNAc...) asparagine glycan is linked to N324. At S332 the chain carries Phosphoserine. Residues N340 and N452 are each glycosylated (N-linked (GlcNAc...) asparagine). The disordered stretch occupies residues 630 to 664; it reads TSPLSPVSPHYSSKFVETSPSGLDPNASVYQPLKK. A phosphoserine mark is found at S631 and S634. N-linked (GlcNAc...) asparagine glycosylation occurs at N655.

Belongs to the macoilin family.

The protein localises to the rough endoplasmic reticulum membrane. It localises to the nucleus membrane. Its function is as follows. Plays a role in the regulation of neuronal activity. The polypeptide is Macoilin (MACO1) (Canis lupus familiaris (Dog)).